Reading from the N-terminus, the 867-residue chain is DNA endonuclease RBBP8 (867 aa).

Residues 25–48 (ELWSKLKECHDKELQELLLKINKL) form an essential for binding to the MRN complex and for RPA focus formation on DNA damage region. Coiled coils occupy residues 38–87 (LQEL…EDRL) and 120–141 (ITEL…SEQL). Disordered stretches follow at residues 141-171 (LHNM…PDSP) and 448-486 (RYGK…HSML). Over residues 154 to 166 (ENPADTGEGEDGV) the composition is skewed to acidic residues. A PXDLS motif motif is present at residues 489 to 493 (PLDLS). Residues 508-531 (SSRGRTKQTFALVPEKPDPKKPLH) are damage-recruitment motif. Thr817 and Thr829 each carry phosphothreonine. A disordered region spans residues 843-867 (SPCQRPRRRQPYNAKFSSKIKEQKT).

This sequence belongs to the COM1/SAE2/CtIP family. In terms of assembly, homotetramer; formed by antiparallel association of helical extensions protruding from the N-termini of two parallel coiled-coil dimers. Interacts with the MRN complex; the interaction links DNA sensing to resection. Interacts with samhd1. In terms of processing, phosphorylation at Thr-817 and Thr-829 promote interaction with nbn and recruitment to double-strand breaks (DSBs).

Its subcellular location is the nucleus. The protein localises to the chromosome. Its function is as follows. Endonuclease that cooperates with the MRE11-RAD50-NBN (MRN) complex in DNA-end resection, the first step of double-strand break (DSB) repair through the homologous recombination (HR) pathway. Functions downstream of the MRN complex and ATM, promotes ATR activation and its recruitment to DSBs in the S/G2 phase facilitating the generation of ssDNA. Specifically promotes the endonuclease activity of the MRN complex to clear DNA ends containing protein adducts: recruited to DSBs by nbn following phosphorylation, and promotes the endonuclease of mre11 to clear protein-DNA adducts and generate clean double-strand break ends. This is DNA endonuclease RBBP8 (rbbp8) from Xenopus tropicalis (Western clawed frog).